The following is a 685-amino-acid chain: MSGLLAAAYSQVYALAVELSVCTRLDPRSLDVAAVVRNAGLLAELEAILLPRLRRQNDRACSALSLELVHLLENSREASAALLAPGRKGTRVPPLRTPSVAYSVEFYGGHKVDVSLCLINDIEILMKRINSVFYCMSHTMGLESLERALDLLGRFRGVSPIPDPRLYITSVPCWRCVGELMVLPNHGNPSTAEGTHVSCNHLAVPVNPEPVSGLFENEVRQAGLGHLLEAEEKARPGGPEEGAVPGPGRPEAEGATRALDTYNVFSTVPPEVAELSELLYWNSGGHAIGATGQGEGGGHSRLSALFARERRLALVRGACEEALAGARLTHLFDAVAPGATERLFCGGVYSSSGDAVEALKADCAAAFTAHPQYRAILQKRNELYTRLNRAMQRLGRGEEEASRESPEVPRPAGAREPGPSGALSDALKRKEQYLRQVATEGLAKLQSCLAQQSETLTETLCLRVWGDVVYWELARMRNHFLYRRAFVSGPWEDRRAGEGAAFENSKYIKTHLFTQTLSSEHLHALTHSLYTFITGPLAEESGLFPPPSNVALARCCDAAGTLPHQKAFLTSLIWPGIEPSDWIETSFNSFYSVPGGSLASSQQILCRALREAVLTVSLYNKTWGRSLILRRADAVSPGQALPPDGLYLTYDSDRPLILLYKGRGWVFKDLYALLYLHLQMRDDSA.

Residues 173 to 201 (CWRCVGELMVLPNHGNPSTAEGTHVSCNH) form a C3H1-type zinc finger. Disordered regions lie at residues 231 to 254 (EEKARPGGPEEGAVPGPGRPEAEG) and 394 to 423 (LGRGEEEASRESPEVPRPAGAREPGPSGAL). A compositionally biased stretch (basic and acidic residues) spans 395 to 407 (GRGEEEASRESPE). Residue 619 to 626 (YNKTWGRS) participates in ATP binding.

This sequence belongs to the herpesviridae TRM1 protein family. As to quaternary structure, associates with TRM2 and TRM3 to form the tripartite terminase complex. Interacts with portal protein.

Its subcellular location is the host nucleus. In terms of biological role, component of the molecular motor that translocates viral genomic DNA in empty capsid during DNA packaging. Forms a tripartite terminase complex together with TRM2 and TRM3 in the host cytoplasm. Once the complex reaches the host nucleus, it interacts with the capsid portal vertex. This portal forms a ring in which genomic DNA is translocated into the capsid. TRM1 carries an endonuclease activity that plays an important role for the cleavage of concatemeric viral DNA into unit length genomes. The chain is Tripartite terminase subunit 1 from Epstein-Barr virus (strain B95-8) (HHV-4).